The primary structure comprises 456 residues: Aminotransferase ALD1, chloroplastic (456 aa).

The transit peptide at 1–43 (MVSLMFFSSASPLCSSPSKIPKASLDFEMKKLGGSTKLVRNVN) directs the protein to the chloroplast. Pyridoxal 5'-phosphate-binding positions include Y108, 142 to 143 (AQ), N223, D251, Y254, S281, S283, R292, and N323.

It belongs to the class-I pyridoxal-phosphate-dependent aminotransferase family. LL-diaminopimelate aminotransferase subfamily. Pyridoxal 5'-phosphate is required as a cofactor. As to expression, highly expressed in senescing leaves, flowers, siliques and seeds.

The protein localises to the plastid. Its subcellular location is the chloroplast. Functionally, aminotransferase involved in local and systemic acquired resistance (SAR) to the bacterial pathogen P.syringae. Required for salicylic acid (SA) and camalexin accumulation upon pathogen infection. Possesses aminotransferase activity in vitro and may generate amino-acid-derived defense signals in vivo. May be involved in ethylene-induced senescence signaling. Involved in the biosynthesis of pipecolate (Pip), a metabolite that orchestrates defense amplification, positive regulation of SA biosynthesis, and priming to guarantee effective local resistance induction and the establishment of SAR. Converts lysine to alpha-keto-epsilon-aminocaproate, which then can spontaneously cyclize to form delta-(1)-piperideine-2-carboxylate (P2C). P2C is converted to Pip by SARD4. May produce non-Pip metabolites that play roles in immunity. Involved in the synthesis of distinct metabolite signals that affect basal and early defenses, and later defense responses. This Arabidopsis thaliana (Mouse-ear cress) protein is Aminotransferase ALD1, chloroplastic.